Consider the following 546-residue polypeptide: uncharacterized protein (546 aa).

3 disordered regions span residues 37-101 (KEND…NQKL), 269-300 (QNKAAADLRKTESHGTHSQSTPPQHSSSQPEV), and 392-443 (LSDL…TSAC). 2 stretches are compositionally biased toward basic and acidic residues: residues 81–93 (DDVKEKKHPENNQ) and 274–283 (ADLRKTESHG). Over residues 284–298 (THSQSTPPQHSSSQP) the composition is skewed to low complexity.

This is an uncharacterized protein from Homo sapiens (Human).